A 308-amino-acid polypeptide reads, in one-letter code: uncharacterized protein (308 aa).

A run of 10 helical transmembrane segments spans residues 45 to 65, 69 to 89, 100 to 120, 122 to 142, 151 to 171, 172 to 192, 201 to 221, 226 to 246, 263 to 283, and 285 to 305; these read LGLALVALIWGSTFPVVKIAL, SPFAFNTVRFFIACLFFLPFL, IGIASFLGYTFQTVGLDYTTA, NAGFITSTYVVLAPIISWLVY, VSGVLLAFVGFYFLSGYSGFN, IGDILMLFCALFFGAEIAMIS, TMLAFWQSFAIFILSAPFAVF, FEINTTVILCLLITAFFATFV, AAVILSLEGVFAHLFSVAVLA, and ILTPVQYFGAFLILLAVIIVS. EamA domains are found at residues 52-166 and 178-306; these read LIWG…FLSG and LFCA…IVSL.

The protein belongs to the EamA transporter family.

The protein localises to the cell membrane. This is an uncharacterized protein from Archaeoglobus fulgidus (strain ATCC 49558 / DSM 4304 / JCM 9628 / NBRC 100126 / VC-16).